The sequence spans 112 residues: Protein FAM32A (112 aa).

A disordered region spans residues 15 to 35; it reads KGCGDMSLGKKKKKKNKANDQ.

Belongs to the FAM32 family.

It localises to the nucleus. Functionally, may induce G2 arrest and apoptosis. May also increase cell sensitivity to apoptotic stimuli. The sequence is that of Protein FAM32A (fam32a) from Xenopus tropicalis (Western clawed frog).